The primary structure comprises 196 residues: Phosphoheptose isomerase (196 aa).

One can recognise an SIS domain in the interval 36–195 (VIQAYKLGKK…EKELFGEKVD (160 aa)). Substrate is bound at residue 51–53 (NGG). Zn(2+)-binding residues include histidine 60 and glutamate 64. Substrate contacts are provided by residues glutamate 64, 93–94 (ND), 119–121 (STS), serine 124, and glutamine 171. Glutamine 171 and histidine 179 together coordinate Zn(2+).

The protein belongs to the SIS family. GmhA subfamily. It depends on Zn(2+) as a cofactor.

The protein localises to the cytoplasm. The enzyme catalyses 2 D-sedoheptulose 7-phosphate = D-glycero-alpha-D-manno-heptose 7-phosphate + D-glycero-beta-D-manno-heptose 7-phosphate. It participates in carbohydrate biosynthesis; D-glycero-D-manno-heptose 7-phosphate biosynthesis; D-glycero-alpha-D-manno-heptose 7-phosphate and D-glycero-beta-D-manno-heptose 7-phosphate from sedoheptulose 7-phosphate: step 1/1. Catalyzes the isomerization of sedoheptulose 7-phosphate in D-glycero-D-manno-heptose 7-phosphate. The protein is Phosphoheptose isomerase of Clostridium acetobutylicum (strain ATCC 824 / DSM 792 / JCM 1419 / IAM 19013 / LMG 5710 / NBRC 13948 / NRRL B-527 / VKM B-1787 / 2291 / W).